Consider the following 140-residue polypeptide: MAAMTYHLDVVSAEKKMFSGVVQKIQVTGSEGELGIFPGHAPLLTAIKPGMIRIVKQFGEEEFIYLSGGILEVQPSVVIVLADTAIRGTDLDEAKALESKRKAEEHINNSHGDVDYAQASAELAKAIAKLRVIELTRKAM.

It belongs to the ATPase epsilon chain family. F-type ATPases have 2 components, CF(1) - the catalytic core - and CF(0) - the membrane proton channel. CF(1) has five subunits: alpha(3), beta(3), gamma(1), delta(1), epsilon(1). CF(0) has three main subunits: a, b and c.

It localises to the cell inner membrane. Functionally, produces ATP from ADP in the presence of a proton gradient across the membrane. The protein is ATP synthase epsilon chain of Yersinia enterocolitica serotype O:8 / biotype 1B (strain NCTC 13174 / 8081).